Consider the following 274-residue polypeptide: MPGDKVTARRILKMKGSRPIVAVTAYDYPTAWIADEAGVDVILVGDSLGMVVLGYPSTLQVTLDDMVRHTAAVARAAKRPLIVADMPFGSYEPSSSAAVESAVALARVGAEAVKLEGGSEYADRVKAIVDAGIPVMGHLGLTPQRAMRIGGYRPRARGRDEARRLLLDAESLVEAGVFSIVLEFVSEEAAEMVTRRVPVPTICIGSGRRCDGQIIVFHDIVGLSRHTPPFAKKYVDARRIMVEAVTRYAEDVRNGRFPGEEHVVHAKEPLEDIS.

Residues Asp-46 and Asp-85 each contribute to the Mg(2+) site. 3-methyl-2-oxobutanoate contacts are provided by residues 46–47 (DS), Asp-85, and Lys-114. Glu-116 is a binding site for Mg(2+). Residue Glu-183 is the Proton acceptor of the active site.

This sequence belongs to the PanB family. Homodecamer; pentamer of dimers. The cofactor is Mg(2+).

It localises to the cytoplasm. It catalyses the reaction 3-methyl-2-oxobutanoate + (6R)-5,10-methylene-5,6,7,8-tetrahydrofolate + H2O = 2-dehydropantoate + (6S)-5,6,7,8-tetrahydrofolate. It participates in cofactor biosynthesis; coenzyme A biosynthesis. In terms of biological role, catalyzes the reversible reaction in which hydroxymethyl group from 5,10-methylenetetrahydrofolate is transferred onto alpha-ketoisovalerate to form ketopantoate. The protein is 3-methyl-2-oxobutanoate hydroxymethyltransferase of Aeropyrum pernix (strain ATCC 700893 / DSM 11879 / JCM 9820 / NBRC 100138 / K1).